The primary structure comprises 672 residues: DNA mismatch repair protein MutL (672 aa).

Residues 443 to 454 (SYTSDSNQYENS) are compositionally biased toward polar residues. Residues 443–469 (SYTSDSNQYENSCKSDVDKESKSKTTG) form a disordered region. The segment covering 455–465 (CKSDVDKESKS) has biased composition (basic and acidic residues).

This sequence belongs to the DNA mismatch repair MutL/HexB family.

Functionally, this protein is involved in the repair of mismatches in DNA. It is required for dam-dependent methyl-directed DNA mismatch repair. May act as a 'molecular matchmaker', a protein that promotes the formation of a stable complex between two or more DNA-binding proteins in an ATP-dependent manner without itself being part of a final effector complex. This Clostridium botulinum (strain Eklund 17B / Type B) protein is DNA mismatch repair protein MutL.